Consider the following 264-residue polypeptide: ORC1-type DNA replication protein 2 (264 aa).

ATP contacts are provided by residues 73–77 (TGKSL), Y220, and R232.

This sequence belongs to the CDC6/cdc18 family.

Functionally, involved in regulation of DNA replication. The polypeptide is ORC1-type DNA replication protein 2 (orc2) (Halobacterium salinarum (strain ATCC 700922 / JCM 11081 / NRC-1) (Halobacterium halobium)).